Reading from the N-terminus, the 134-residue chain is DNA-directed RNA polymerase subunit omega (134 aa).

Positions 77 to 108 are disordered; it reads IDEPEPDPASLLAAGGNASASGDEEEDAPEAV. The span at 85–97 shows a compositional bias: low complexity; sequence ASLLAAGGNASAS.

This sequence belongs to the RNA polymerase subunit omega family. As to quaternary structure, the RNAP catalytic core consists of 2 alpha, 1 beta, 1 beta' and 1 omega subunit. When a sigma factor is associated with the core the holoenzyme is formed, which can initiate transcription.

It carries out the reaction RNA(n) + a ribonucleoside 5'-triphosphate = RNA(n+1) + diphosphate. Its function is as follows. Promotes RNA polymerase assembly. Latches the N- and C-terminal regions of the beta' subunit thereby facilitating its interaction with the beta and alpha subunits. The chain is DNA-directed RNA polymerase subunit omega from Rhizobium rhizogenes (strain K84 / ATCC BAA-868) (Agrobacterium radiobacter).